A 254-amino-acid polypeptide reads, in one-letter code: 5'/3'-nucleotidase SurE (254 aa).

A divalent metal cation contacts are provided by Asp9, Asp10, Ser40, and Asn93.

It belongs to the SurE nucleotidase family. A divalent metal cation is required as a cofactor.

The protein localises to the cytoplasm. The catalysed reaction is a ribonucleoside 5'-phosphate + H2O = a ribonucleoside + phosphate. The enzyme catalyses a ribonucleoside 3'-phosphate + H2O = a ribonucleoside + phosphate. It catalyses the reaction [phosphate](n) + H2O = [phosphate](n-1) + phosphate + H(+). In terms of biological role, nucleotidase with a broad substrate specificity as it can dephosphorylate various ribo- and deoxyribonucleoside 5'-monophosphates and ribonucleoside 3'-monophosphates with highest affinity to 3'-AMP. Also hydrolyzes polyphosphate (exopolyphosphatase activity) with the preference for short-chain-length substrates (P20-25). Might be involved in the regulation of dNTP and NTP pools, and in the turnover of 3'-mononucleotides produced by numerous intracellular RNases (T1, T2, and F) during the degradation of various RNAs. The sequence is that of 5'/3'-nucleotidase SurE from Yersinia pestis bv. Antiqua (strain Antiqua).